A 371-amino-acid chain; its full sequence is Queuine tRNA-ribosyltransferase (371 aa).

Catalysis depends on Asp-90, which acts as the Proton acceptor. Substrate is bound by residues 90–94 (DSGGF), Asp-144, Gln-189, and Gly-215. The interval 246–252 (GVGTPEN) is RNA binding. Asp-265 serves as the catalytic Nucleophile. The segment at 270–274 (TRNAR) is RNA binding; important for wobble base 34 recognition. Zn(2+) is bound by residues Cys-303, Cys-305, Cys-308, and His-334.

This sequence belongs to the queuine tRNA-ribosyltransferase family. Homodimer. Within each dimer, one monomer is responsible for RNA recognition and catalysis, while the other monomer binds to the replacement base PreQ1. Zn(2+) serves as cofactor.

It catalyses the reaction 7-aminomethyl-7-carbaguanine + guanosine(34) in tRNA = 7-aminomethyl-7-carbaguanosine(34) in tRNA + guanine. It functions in the pathway tRNA modification; tRNA-queuosine biosynthesis. Catalyzes the base-exchange of a guanine (G) residue with the queuine precursor 7-aminomethyl-7-deazaguanine (PreQ1) at position 34 (anticodon wobble position) in tRNAs with GU(N) anticodons (tRNA-Asp, -Asn, -His and -Tyr). Catalysis occurs through a double-displacement mechanism. The nucleophile active site attacks the C1' of nucleotide 34 to detach the guanine base from the RNA, forming a covalent enzyme-RNA intermediate. The proton acceptor active site deprotonates the incoming PreQ1, allowing a nucleophilic attack on the C1' of the ribose to form the product. After dissociation, two additional enzymatic reactions on the tRNA convert PreQ1 to queuine (Q), resulting in the hypermodified nucleoside queuosine (7-(((4,5-cis-dihydroxy-2-cyclopenten-1-yl)amino)methyl)-7-deazaguanosine). The polypeptide is Queuine tRNA-ribosyltransferase (Helicobacter pylori (strain P12)).